A 141-amino-acid polypeptide reads, in one-letter code: Aspartate 1-decarboxylase (141 aa).

The active-site Schiff-base intermediate with substrate; via pyruvic acid is Ser-25. Ser-25 bears the Pyruvic acid (Ser) mark. Thr-57 contributes to the substrate binding site. The active-site Proton donor is Tyr-58. 73 to 75 (GAA) contributes to the substrate binding site. The tract at residues 121-141 (ASAPVPGSRTERSPQAVVAGG) is disordered.

It belongs to the PanD family. As to quaternary structure, heterooctamer of four alpha and four beta subunits. The cofactor is pyruvate. In terms of processing, is synthesized initially as an inactive proenzyme, which is activated by self-cleavage at a specific serine bond to produce a beta-subunit with a hydroxyl group at its C-terminus and an alpha-subunit with a pyruvoyl group at its N-terminus.

The protein localises to the cytoplasm. It carries out the reaction L-aspartate + H(+) = beta-alanine + CO2. It participates in cofactor biosynthesis; (R)-pantothenate biosynthesis; beta-alanine from L-aspartate: step 1/1. In terms of biological role, catalyzes the pyruvoyl-dependent decarboxylation of aspartate to produce beta-alanine. This chain is Aspartate 1-decarboxylase, found in Streptomyces griseus subsp. griseus (strain JCM 4626 / CBS 651.72 / NBRC 13350 / KCC S-0626 / ISP 5235).